The chain runs to 45 residues: uncharacterized protein (45 aa).

This is an uncharacterized protein from Acidianus two-tailed virus (ATV).